Here is a 570-residue protein sequence, read N- to C-terminus: Nucleoprotein (570 aa).

Residues 54–241 (MRKDKRNDSD…IDVSKSSINV (188 aa)) are binding site for the cap structure m7GTP. The tract at residues 342–361 (IDLSQNKQMSPAKPKGAGHG) is disordered. Positions 390 and 392 each coordinate Mn(2+). Residues glutamate 400, cysteine 507, histidine 510, and cysteine 530 each coordinate Zn(2+). Position 534 (aspartate 534) interacts with Mn(2+).

This sequence belongs to the arenaviridae nucleocapsid protein family. Homomultimerizes to form the nucleocapsid. Binds to viral genomic RNA. Interacts with glycoprotein G2. Interacts with protein Z; this interaction probably directs the encapsidated genome to budding sites. Interacts with protein L; this interaction does not interfere with Z-L interaction. Interacts with host IKBKE (via Protein kinase domain); the interaction inhibits IKBKE kinase activity.

The protein resides in the virion. The protein localises to the host cytoplasm. In terms of biological role, encapsidates the genome, protecting it from nucleases. The encapsidated genomic RNA is termed the nucleocapsid (NC). Serves as template for viral transcription and replication. The increased presence of protein N in host cell does not seem to trigger the switch from transcription to replication as observed in other negative strain RNA viruses. Through the interaction with host IKBKE, strongly inhibits the phosphorylation and nuclear translocation of host IRF3, a protein involved in interferon activation pathway, leading to the inhibition of interferon-beta and IRF3-dependent promoters activation. Also encodes a functional 3'-5' exoribonuclease that degrades preferentially dsRNA substrates and thereby participates in the suppression of interferon induction. This is Nucleoprotein from Praomys (African soft-furred rats).